The primary structure comprises 512 residues: 2,3-bisphosphoglycerate-independent phosphoglycerate mutase (512 aa).

Residues Asp12 and Ser62 each coordinate Mn(2+). The active-site Phosphoserine intermediate is Ser62. Residues His123, 153–154, Arg185, Arg191, 260–263, and Lys333 contribute to the substrate site; these read RD and RPDR. Mn(2+) contacts are provided by Asp400, His404, Asp441, His442, and His460.

It belongs to the BPG-independent phosphoglycerate mutase family. Monomer. The cofactor is Mn(2+).

The catalysed reaction is (2R)-2-phosphoglycerate = (2R)-3-phosphoglycerate. The protein operates within carbohydrate degradation; glycolysis; pyruvate from D-glyceraldehyde 3-phosphate: step 3/5. Its function is as follows. Catalyzes the interconversion of 2-phosphoglycerate and 3-phosphoglycerate. The protein is 2,3-bisphosphoglycerate-independent phosphoglycerate mutase of Clostridium beijerinckii (strain ATCC 51743 / NCIMB 8052) (Clostridium acetobutylicum).